A 260-amino-acid chain; its full sequence is Shikimate dehydrogenase (260 aa).

K71 acts as the Proton acceptor in catalysis. Residue 124–128 (GAGGA) participates in NADP(+) binding.

It belongs to the shikimate dehydrogenase family.

The enzyme catalyses shikimate + NADP(+) = 3-dehydroshikimate + NADPH + H(+). Its pathway is metabolic intermediate biosynthesis; chorismate biosynthesis; chorismate from D-erythrose 4-phosphate and phosphoenolpyruvate: step 4/7. The sequence is that of Shikimate dehydrogenase (aroE) from Sulfurisphaera tokodaii (strain DSM 16993 / JCM 10545 / NBRC 100140 / 7) (Sulfolobus tokodaii).